We begin with the raw amino-acid sequence, 132 residues long: Small ribosomal subunit protein uS11 (132 aa).

Belongs to the universal ribosomal protein uS11 family. In terms of assembly, part of the 30S ribosomal subunit. Interacts with proteins S7 and S18. Binds to IF-3.

In terms of biological role, located on the platform of the 30S subunit, it bridges several disparate RNA helices of the 16S rRNA. Forms part of the Shine-Dalgarno cleft in the 70S ribosome. In Clostridium botulinum (strain 657 / Type Ba4), this protein is Small ribosomal subunit protein uS11.